The primary structure comprises 140 residues: Large ribosomal subunit protein uL16 (140 aa).

The protein belongs to the universal ribosomal protein uL16 family. As to quaternary structure, part of the 50S ribosomal subunit.

Its function is as follows. Binds 23S rRNA and is also seen to make contacts with the A and possibly P site tRNAs. In Citrifermentans bemidjiense (strain ATCC BAA-1014 / DSM 16622 / JCM 12645 / Bem) (Geobacter bemidjiensis), this protein is Large ribosomal subunit protein uL16.